The following is a 124-amino-acid chain: uncharacterized protein (124 aa).

It is found in the cytoplasm. Its subcellular location is the nucleus. This is an uncharacterized protein from Schizosaccharomyces pombe (strain 972 / ATCC 24843) (Fission yeast).